The primary structure comprises 471 residues: 6-phosphofructo-2-kinase/fructose-2,6-bisphosphatase 1 (471 aa).

An N-acetylserine modification is found at S2. Residues 2–250 (SQEMGELTQT…VYYLMNIHVT (249 aa)) form a 6-phosphofructo-2-kinase region. S33 carries the phosphoserine; by PKA modification. An ATP-binding site is contributed by 49-57 (GLPARGKTY). Residues R82 and R105 each coordinate beta-D-fructose 6-phosphate. D131 is an active-site residue. Beta-D-fructose 6-phosphate is bound by residues T133 and R139. S141 carries the post-translational modification Phosphoserine. C161 is a catalytic residue. An ATP-binding site is contributed by 170 to 175 (NIRQVK). Beta-D-fructose 6-phosphate contacts are provided by K175, R196, and Y200. Residues 251–471 (PRSIYLCRHG…EALDTVPAHY (221 aa)) are fructose-2,6-bisphosphatase. A beta-D-fructose 2,6-bisphosphate-binding site is contributed by R258. H259 (tele-phosphohistidine intermediate) is an active-site residue. Beta-D-fructose 2,6-bisphosphate contacts are provided by N265, G271, and R308. E328 acts as the Proton donor/acceptor in catalysis. The beta-D-fructose 2,6-bisphosphate site is built by Y339, R353, K357, Y368, Q394, and R398. ATP is bound at residue 350-353 (FALR). Residues 394-398 (QAVMR) and Y430 contribute to the ATP site.

The protein in the C-terminal section; belongs to the phosphoglycerate mutase family. As to quaternary structure, homodimer. As to expression, liver.

The catalysed reaction is beta-D-fructose 2,6-bisphosphate + H2O = beta-D-fructose 6-phosphate + phosphate. The enzyme catalyses beta-D-fructose 6-phosphate + ATP = beta-D-fructose 2,6-bisphosphate + ADP + H(+). Its activity is regulated as follows. Phosphorylation at Ser-33 inhibits the kinase and activates the bisphosphatase. In terms of biological role, synthesis and degradation of fructose 2,6-bisphosphate. This chain is 6-phosphofructo-2-kinase/fructose-2,6-bisphosphatase 1, found in Bos taurus (Bovine).